Consider the following 269-residue polypeptide: MTESEKRKSRITTRTLQRMRDRGERITMLTAYDFPTAKILDEAGVDVLLVGDTVGMVVQGHSTTLPVTMDQMIYHAEMVGRAADHAMVVVDLPFPDGQLDLLHSVRCGARVLKETQCHAVKLEGGAEQAERIEAMVGAGIPVMAHIGLRPQNIHVEGGYRLQRDIERLVADAKAAEAAGAFTVLIECVPSEAAAAITDAVKVPTIGIGAGRDVSGQVLVTHDILGLTSGYTPKFTRLFADVGNTIREAAKSYCDEVKAASFPSDAESFE.

Asp52 and Asp91 together coordinate Mg(2+). Residues 52 to 53 (DT), Asp91, and Lys121 contribute to the 3-methyl-2-oxobutanoate site. Residue Glu123 coordinates Mg(2+). Glu186 (proton acceptor) is an active-site residue.

Belongs to the PanB family. As to quaternary structure, homodecamer; pentamer of dimers. It depends on Mg(2+) as a cofactor.

Its subcellular location is the cytoplasm. The enzyme catalyses 3-methyl-2-oxobutanoate + (6R)-5,10-methylene-5,6,7,8-tetrahydrofolate + H2O = 2-dehydropantoate + (6S)-5,6,7,8-tetrahydrofolate. It participates in cofactor biosynthesis; (R)-pantothenate biosynthesis; (R)-pantoate from 3-methyl-2-oxobutanoate: step 1/2. Its function is as follows. Catalyzes the reversible reaction in which hydroxymethyl group from 5,10-methylenetetrahydrofolate is transferred onto alpha-ketoisovalerate to form ketopantoate. This is 3-methyl-2-oxobutanoate hydroxymethyltransferase from Rhodopirellula baltica (strain DSM 10527 / NCIMB 13988 / SH1).